The primary structure comprises 42 residues: Photosystem I reaction center subunit IX (42 aa).

Residues 7 to 27 (YLSTAPVLSALWFAILAGLLI) form a helical membrane-spanning segment.

Belongs to the PsaJ family.

It localises to the plastid. It is found in the chloroplast thylakoid membrane. In terms of biological role, may help in the organization of the PsaE and PsaF subunits. The sequence is that of Photosystem I reaction center subunit IX from Chlorokybus atmophyticus (Soil alga).